Reading from the N-terminus, the 123-residue chain is Small ribosomal subunit protein uS13 (123 aa).

Residues 97–123 (PVRGQRTHTNAKTRKGRSRLPVAAKKK) are disordered.

It belongs to the universal ribosomal protein uS13 family. Part of the 30S ribosomal subunit. Forms a loose heterodimer with protein S19. Forms two bridges to the 50S subunit in the 70S ribosome.

In terms of biological role, located at the top of the head of the 30S subunit, it contacts several helices of the 16S rRNA. In the 70S ribosome it contacts the 23S rRNA (bridge B1a) and protein L5 of the 50S subunit (bridge B1b), connecting the 2 subunits; these bridges are implicated in subunit movement. Contacts the tRNAs in the A and P-sites. This Ehrlichia ruminantium (strain Gardel) protein is Small ribosomal subunit protein uS13.